The primary structure comprises 433 residues: Anthranilate synthase component 1 (433 aa).

Residues S29 and 219–221 (PYT) contribute to the L-tryptophan site. 253-254 (GT) contacts chorismate. E280 contacts Mg(2+). Chorismate-binding positions include Y368, R388, 402–404 (GAG), and G404. Position 417 (E417) interacts with Mg(2+).

The protein belongs to the anthranilate synthase component I family. Heterotetramer consisting of two non-identical subunits: a beta subunit (TrpG) and a large alpha subunit (TrpE). Mg(2+) is required as a cofactor.

It carries out the reaction chorismate + L-glutamine = anthranilate + pyruvate + L-glutamate + H(+). Its pathway is amino-acid biosynthesis; L-tryptophan biosynthesis; L-tryptophan from chorismate: step 1/5. Feedback inhibited by tryptophan. Its function is as follows. Part of a heterotetrameric complex that catalyzes the two-step biosynthesis of anthranilate, an intermediate in the biosynthesis of L-tryptophan. In the first step, the glutamine-binding beta subunit (TrpG) of anthranilate synthase (AS) provides the glutamine amidotransferase activity which generates ammonia as a substrate that, along with chorismate, is used in the second step, catalyzed by the large alpha subunit of AS (TrpE) to produce anthranilate. In the absence of TrpG, TrpE can synthesize anthranilate directly from chorismate and high concentrations of ammonia. The sequence is that of Anthranilate synthase component 1 (trpE) from Thermococcus kodakarensis (strain ATCC BAA-918 / JCM 12380 / KOD1) (Pyrococcus kodakaraensis (strain KOD1)).